We begin with the raw amino-acid sequence, 239 residues long: UPF0502 protein Bcen_5249 (239 aa).

A disordered region spans residues 196 to 239 (IRGAKGRTEAPRGRSGATQCAGSTDGERTRHRRRRTGRRVLIAS). Positions 224-233 (TRHRRRRTGR) are enriched in basic residues.

Belongs to the UPF0502 family.

The polypeptide is UPF0502 protein Bcen_5249 (Burkholderia orbicola (strain AU 1054)).